The sequence spans 257 residues: MIVEKRRFPSPSQHVRLYTICYLSNGLRVKGLLAEPAEPGQYDGFLYLRGGIKSVGMVRPGRIIQFASQGFVVFAPFYRGNQGGEGNEDFAGEDREDAFSAFRLLQQHPNVKKDRIHIFGFSRGGIMGMLTAIEMGGQAASFVSWGGVSDMILTYEERQDLRRMMKRVIGGTPKKVPEEYQWRTPFDQVNKIQAPVLLIHGEKDQNVSIQHSYLLEEKLKQLHKPVETWYYSTFTHYFPPKENRRIVRQLTQWMKNR.

Residues serine 122 and histidine 236 each act as charge relay system in the active site.

This sequence belongs to the peptidase S9B family.

This is an uncharacterized protein from Bacillus subtilis (strain 168).